Consider the following 261-residue polypeptide: Oligodendrocyte transcription factor 1 (261 aa).

Positions 41–105 (PPISSSSSTS…LRRKINSRER (65 aa)) are disordered. The segment covering 44–56 (SSSSSTSSSSTAS) has biased composition (low complexity). Positions 95–154 (QLRRKINSRERKRMQDLNLAMDALREVILPYSAAHCQGAPGRKLSKIATLLLARNYILLL) constitute a bHLH domain.

Expressed specifically in the brain, including the corpus callosum, hippocampal and cerebral white matter. Also detected in cells scattered in gray matter, most probably in oligodendrocytes.

The protein resides in the nucleus. Functionally, promotes formation and maturation of oligodendrocytes, especially within the brain. Cooperates with OLIG2 to establish the pMN domain of the embryonic neural tube. This is Oligodendrocyte transcription factor 1 (Olig1) from Rattus norvegicus (Rat).